Reading from the N-terminus, the 82-residue chain is Neuropeptide-like peptide 36 (82 aa).

The protein is Neuropeptide-like peptide 36 (nlp-36) of Caenorhabditis elegans.